The primary structure comprises 272 residues: MSQQRTARRQPSLLVDPAQETVRRRCRDPINVENLLPSKIRINLEENVQYVSMRKALKVKRPRFDVSLVYLTRKFMDLVRSAPGGILDLNKVATKLGVRKRRVYDITNVLDGIELVEKKSKNHIRWIGSDLNNFGAAPQQKKLQAELSDLSAMEDALDELIKDCAQQLLELTDDKENERLAYVTYQDIHGIQAFHEQIVIAVKAPEETRLDVPAPREDSITVHIRSTKGPIDVYLCEVEQNHSNGKTNDGIGASPSKSSHPQCPEKEDEPPQ.

Residues 1–62 are binding to corepressors; it reads MSQQRTARRQ…MRKALKVKRP (62 aa). A DNA-binding region spans residues 50–129; sequence YVSMRKALKV…SKNHIRWIGS (80 aa). Residues 95–129 carry the DEF box motif; it reads KLGVRKRRVYDITNVLDGIELVEKKSKNHIRWIGS. A dimerization region spans residues 130-222; that stretch reads DLNNFGAAPQ…PAPREDSITV (93 aa). Residues 143 to 164 are leucine-zipper; the sequence is LQAELSDLSAMEDALDELIKDC. A transcription repression region spans residues 173–272; it reads DDKENERLAY…CPEKEDEPPQ (100 aa). The tract at residues 242-272 is disordered; that stretch reads HSNGKTNDGIGASPSKSSHPQCPEKEDEPPQ.

This sequence belongs to the E2F/DP family. As to quaternary structure, forms heterodimers with DP family members TFDP1 or TFDP2. Component of the DRTF1/E2F transcription factor complex. Part of the E2F6.com-1 complex in G0 phase composed of E2F6, MGA, MAX, TFDP1, CBX3, BAT8, EUHMTASE1, RING1, RNF2, MBLR, L3MBTL2 and YAF2. Component of some MLL1/MLL complex, at least composed of the core components KMT2A/MLL1, ASH2L, HCFC1/HCF1, WDR5 and RBBP5, as well as the facultative components BACC1, CHD8, E2F6, HSP70, INO80C, KANSL1, LAS1L, MAX, MCRS1, MGA, KAT8/MOF, PELP1, PHF20, PRP31, RING2, RUVB1/TIP49A, RUVB2/TIP49B, SENP3, TAF1, TAF4, TAF6, TAF7, TAF9 and TEX10.

The protein localises to the nucleus. Inhibitor of E2F-dependent transcription. Binds DNA cooperatively with DP proteins through the E2 recognition site, 5'-TTTC[CG]CGC-3'. Has a preference for the 5'-TTTCCCGC-3' E2F recognition site. E2F6 lacks the transcriptional activation and pocket protein binding domains. Appears to regulate a subset of E2F-dependent genes whose products are required for entry into the cell cycle but not for normal cell cycle progression. Represses expression of some meiosis-specific genes, including SLC25A31/ANT4. May silence expression via the recruitment of a chromatin remodeling complex containing histone H3-K9 methyltransferase activity. Overexpression delays the exit of cells from the S-phase. In Mus musculus (Mouse), this protein is Transcription factor E2F6.